Here is a 137-residue protein sequence, read N- to C-terminus: Large ribosomal subunit protein uL16 (137 aa).

It belongs to the universal ribosomal protein uL16 family. Part of the 50S ribosomal subunit.

Binds 23S rRNA and is also seen to make contacts with the A and possibly P site tRNAs. In Pseudomonas syringae pv. tomato (strain ATCC BAA-871 / DC3000), this protein is Large ribosomal subunit protein uL16.